Consider the following 338-residue polypeptide: Nucleoid-associated protein CGSHiGG_07705 (338 aa).

Belongs to the YejK family.

The protein localises to the cytoplasm. It is found in the nucleoid. The protein is Nucleoid-associated protein CGSHiGG_07705 of Haemophilus influenzae (strain PittGG).